A 104-amino-acid polypeptide reads, in one-letter code: Large ribosomal subunit protein bL21 (104 aa).

The protein belongs to the bacterial ribosomal protein bL21 family. In terms of assembly, part of the 50S ribosomal subunit. Contacts protein L20.

This protein binds to 23S rRNA in the presence of protein L20. This is Large ribosomal subunit protein bL21 from Streptococcus equi subsp. equi (strain 4047).